The chain runs to 178 residues: Peptide methionine sulfoxide reductase MsrA (178 aa).

Cysteine 14 is a catalytic residue.

This sequence belongs to the MsrA Met sulfoxide reductase family.

The catalysed reaction is L-methionyl-[protein] + [thioredoxin]-disulfide + H2O = L-methionyl-(S)-S-oxide-[protein] + [thioredoxin]-dithiol. It carries out the reaction [thioredoxin]-disulfide + L-methionine + H2O = L-methionine (S)-S-oxide + [thioredoxin]-dithiol. Its function is as follows. Has an important function as a repair enzyme for proteins that have been inactivated by oxidation. Catalyzes the reversible oxidation-reduction of methionine sulfoxide in proteins to methionine. The sequence is that of Peptide methionine sulfoxide reductase MsrA from Bacillus pumilus (strain SAFR-032).